The sequence spans 505 residues: DEAD-box ATP-dependent RNA helicase 8 (505 aa).

Residues 1 to 85 (MNNRGRYPPG…GQIPGGNSNG (85 aa)) are disordered. The span at 20–31 (PNPNYQSRSGYQ) shows a compositional bias: polar residues. Residues 43–71 (NYAQNHQQQFQQAPSQPHQYQQQQQQQQQ) show a composition bias toward low complexity. The Q motif motif lies at 131-159 (NEFEDYFLKRELLMGIYEKGFERPSPIQE). The 171-residue stretch at 162 to 332 (IPIALTGRDI…DRFLTNPYVI (171 aa)) folds into the Helicase ATP-binding domain. 175 to 182 (AKNGTGKT) contacts ATP. Thr237 carries the phosphothreonine modification. The DEAD box signature appears at 280–283 (DEAD). Residues 342-502 (GITQFYAFVE…QIPPHIDQAI (161 aa)) form the Helicase C-terminal domain.

This sequence belongs to the DEAD box helicase family. DDX6/DHH1 subfamily.

Its subcellular location is the cytoplasm. The protein localises to the P-body. The enzyme catalyses ATP + H2O = ADP + phosphate + H(+). ATP-dependent RNA helicase involved in mRNA turnover, and more specifically in mRNA decapping. This is DEAD-box ATP-dependent RNA helicase 8 (RH8) from Arabidopsis thaliana (Mouse-ear cress).